We begin with the raw amino-acid sequence, 105 residues long: Large ribosomal subunit protein bL21 (105 aa).

It belongs to the bacterial ribosomal protein bL21 family. As to quaternary structure, part of the 50S ribosomal subunit. Contacts protein L20.

Functionally, this protein binds to 23S rRNA in the presence of protein L20. In Aliarcobacter butzleri (strain RM4018) (Arcobacter butzleri), this protein is Large ribosomal subunit protein bL21.